An 817-amino-acid chain; its full sequence is Kinesin-like protein 2 (817 aa).

The tract at residues 1–155 (MEEEGHKSLT…YNDEKSVNAS (155 aa)) is disordered. A compositionally biased stretch (low complexity) spans 8-23 (SLTSHLPQSSSSLSQS). Positions 39 to 60 (IKTNSSSSNILKPRLSLQNEVN) are enriched in polar residues. Positions 76–86 (SLASVKSSSLA) are enriched in low complexity. A compositionally biased stretch (polar residues) spans 106-116 (PISSRSVSASS). Low complexity predominate over residues 122-132 (ASAVSSSLNSS). Positions 155 to 242 (SALRTTEDRL…VSQKGMESLE (88 aa)) form a coiled coil. Residues Asn473, Arg475, Arg479, Glu543, Gly566, Ser567, Gly568, Lys569, Thr570, and Thr778 each contribute to the ATP site. The Kinesin motor domain maps to 473–807 (NIRVFCRVRP…LRFATKVNNT (335 aa)).

The protein belongs to the TRAFAC class myosin-kinesin ATPase superfamily. Kinesin family. NCD subfamily.

It localises to the cytoplasm. Its subcellular location is the cytoskeleton. It is found in the spindle. The protein resides in the nucleus. The catalysed reaction is ATP + H2O = ADP + phosphate + H(+). It carries out the reaction ATP + H2O + a kinesin associated with a microtubule at position (n) = ADP + phosphate + a kinesin associated with a microtubule at position (n-1, toward the minus end).. Functionally, minus end-directed microtubule (MT) motor that is involved in spindle microtubule shortening, kinetochore capture, and polarization of cytoplasmic microtubules. During mitosis, promotes spindle microtubule shortening by depolymerization. During metaphase, involved in the recapture of kinetochores displaced from the spindle and their transport towards the spindle pole body; promotes transport both by microtubule end-on pulling and by lateral sliding along the side of the microtubule. During interphase, required for the polarization of cytoplasmic microtubules where it orients the microtubule plus ends toward the cell ends and the minus ends toward the cell center. Required for karyogamy. The chain is Kinesin-like protein 2 from Schizosaccharomyces pombe (strain 972 / ATCC 24843) (Fission yeast).